The primary structure comprises 2092 residues: Nonribosomal peptide synthetase echPS (2092 aa).

The segment at 13–406 is adenylation 1; the sequence is FSQRCCQNPD…GRRDRVTKIR (394 aa). The 77-residue stretch at 524–600 folds into the Carrier 1 domain; that stretch reads SGPLTIGQAI…SLIEKSRHET (77 aa). Ser-561 carries the post-translational modification O-(pantetheine 4'-phosphoryl)serine. Residues 596-626 are disordered; that stretch reads SRHETEDTPDSSAFATRTPEESSMPTQGPVT. Over residues 605–624 the composition is skewed to polar residues; the sequence is DSSAFATRTPEESSMPTQGP. The interval 624 to 1017 is condensation 1; that stretch reads PVTPLQKRMV…YTSLLDAFLD (394 aa). Positions 1068–1446 are adenylation 2; the sequence is ASLYPTHVAV…GRKDRQVKVR (379 aa). One can recognise a Carrier 2 domain in the interval 1544-1622; sequence IKTTHLEKLI…DLVILVAQQQ (79 aa). Position 1582 is an O-(pantetheine 4'-phosphoryl)serine (Ser-1582). The condensation 2 stretch occupies residues 1663–2047; sequence SQSQSTFNVS…EALLLECFRI (385 aa).

This sequence belongs to the NRP synthetase family. It depends on pantetheine 4'-phosphate as a cofactor.

The enzyme catalyses L-tryptophan + L-alanine + 2 ATP = cyclo(L-tryptophyl-L-alanyl) + 2 ADP + 2 phosphate + 2 H(+). The protein operates within secondary metabolite biosynthesis. It participates in alkaloid biosynthesis. Its function is as follows. Nonribosomal peptide synthetase; part of the gene cluster that mediates the biosynthesis of echinulin family alkaloid. The pathway begins with the biosynthesis of the cyclic dipeptide cyclo-L-Trp-L-Ala (cyclo-TA) by the NRPS echPS via condensation of L-alanine and L-tryptophan. The prenyltransferase echPT1 then catalyzes the first prenylation step, a reverse prenylation reaction at C2, to yield preechinulin. Preechinulin is the substrate of the cytochrome P450 monooxygenase echP450 that catalyzes the formation of the double bond between C10 and C11 to produce neoechulin A. The unique prenyltransferase echPT2 functions as a competitive enzyme with echP450 for preechinulin metabolization and uses preechinulin for effective regiospecific prenylations. Preechinulin is prenylated by echPT2 at C5 or C7. C7-prenylation leads to accumulation of tardioxopiperazine B without further modification by echPT2. In contrast, the C5-prenylated tardioxopiperazine A can be prenylated again by echPT2, predominantly at C7 to form echinulin or less frequently at C4 to give variecolorin L. EchPT2 also accepts neoechilunin A to produce varlecolorin G (prenylation at C5) or isoechinulin A (prenylation at C7). EchPT2 further converts isoechinulin A into dehydroechinulin. Moreover, a yet unidentified enzyme can also convert neoechilunin A into neoechilunin B by introducing a double bond between positions C14 and C17 and thus provides a further substrate to echPT2 for C5 and C7 prenylation. This Aspergillus ruber (strain CBS 135680) protein is Nonribosomal peptide synthetase echPS.